The sequence spans 171 residues: Crossover junction endodeoxyribonuclease RuvC (171 aa).

Residues Asp-7, Glu-67, and Asp-139 contribute to the active site. Mg(2+) is bound by residues Asp-7, Glu-67, and Asp-139.

It belongs to the RuvC family. In terms of assembly, homodimer which binds Holliday junction (HJ) DNA. The HJ becomes 2-fold symmetrical on binding to RuvC with unstacked arms; it has a different conformation from HJ DNA in complex with RuvA. In the full resolvosome a probable DNA-RuvA(4)-RuvB(12)-RuvC(2) complex forms which resolves the HJ. It depends on Mg(2+) as a cofactor.

It is found in the cytoplasm. It catalyses the reaction Endonucleolytic cleavage at a junction such as a reciprocal single-stranded crossover between two homologous DNA duplexes (Holliday junction).. Functionally, the RuvA-RuvB-RuvC complex processes Holliday junction (HJ) DNA during genetic recombination and DNA repair. Endonuclease that resolves HJ intermediates. Cleaves cruciform DNA by making single-stranded nicks across the HJ at symmetrical positions within the homologous arms, yielding a 5'-phosphate and a 3'-hydroxyl group; requires a central core of homology in the junction. The consensus cleavage sequence is 5'-(A/T)TT(C/G)-3'. Cleavage occurs on the 3'-side of the TT dinucleotide at the point of strand exchange. HJ branch migration catalyzed by RuvA-RuvB allows RuvC to scan DNA until it finds its consensus sequence, where it cleaves and resolves the cruciform DNA. The protein is Crossover junction endodeoxyribonuclease RuvC of Geotalea uraniireducens (strain Rf4) (Geobacter uraniireducens).